A 683-amino-acid polypeptide reads, in one-letter code: Translation factor guf1, mitochondrial (683 aa).

The transit peptide at 1-43 directs the protein to the mitochondrion; it reads MRGCLQLARWLSAAPKGTAASLTRAPFVLANAPRFFTSSASHA. The tr-type G domain occupies 66–250; it reads ERYRNFCIVA…KIPAYGYFPV (185 aa). GTP contacts are provided by residues 75 to 82, 139 to 143, and 193 to 196; these read AHVDHGKS, DTPGH, and NKVD.

It belongs to the TRAFAC class translation factor GTPase superfamily. Classic translation factor GTPase family. LepA subfamily.

The protein resides in the mitochondrion inner membrane. It catalyses the reaction GTP + H2O = GDP + phosphate + H(+). Its function is as follows. Promotes mitochondrial protein synthesis. May act as a fidelity factor of the translation reaction, by catalyzing a one-codon backward translocation of tRNAs on improperly translocated ribosomes. Binds to mitochondrial ribosomes in a GTP-dependent manner. The protein is Translation factor guf1, mitochondrial (guf1) of Neosartorya fischeri (strain ATCC 1020 / DSM 3700 / CBS 544.65 / FGSC A1164 / JCM 1740 / NRRL 181 / WB 181) (Aspergillus fischerianus).